The following is a 182-amino-acid chain: Isopentenyl-diphosphate Delta-isomerase (182 aa).

Mn(2+) is bound by residues H25 and H32. Residues L30–M164 enclose the Nudix hydrolase domain. The active site involves C67. H69 provides a ligand contact to Mn(2+). Position 87 (E87) interacts with Mg(2+). Mn(2+) is bound by residues E114 and E116. E116 is an active-site residue.

This sequence belongs to the IPP isomerase type 1 family. In terms of assembly, homodimer. Requires Mg(2+) as cofactor. It depends on Mn(2+) as a cofactor.

The protein localises to the cytoplasm. It carries out the reaction isopentenyl diphosphate = dimethylallyl diphosphate. It functions in the pathway isoprenoid biosynthesis; dimethylallyl diphosphate biosynthesis; dimethylallyl diphosphate from isopentenyl diphosphate: step 1/1. In terms of biological role, catalyzes the 1,3-allylic rearrangement of the homoallylic substrate isopentenyl (IPP) to its highly electrophilic allylic isomer, dimethylallyl diphosphate (DMAPP). This is Isopentenyl-diphosphate Delta-isomerase from Escherichia coli O9:H4 (strain HS).